Consider the following 422-residue polypeptide: Cystine lyase CORI3 (422 aa).

The protein belongs to the class-I pyridoxal-phosphate-dependent aminotransferase family. Homodimer. Pyridoxal 5'-phosphate serves as cofactor. As to expression, expressed in cotyledons, sepals, pistils, flower buds, phloem companion cells and vascular tissues of petiole, leaf, filament and fruit.

The catalysed reaction is L-cystine + H2O = S-sulfanyl-L-cysteine + pyruvate + NH4(+). Functionally, possesses cystine lyase activity in vitro. Does not possess tyrosine aminotransferase, alanine aminotransferase, aspartate aminotransferase and tryptophan aminotransferase activities. In Arabidopsis thaliana (Mouse-ear cress), this protein is Cystine lyase CORI3.